A 1221-amino-acid chain; its full sequence is WEB family protein At4g27595, chloroplastic (1221 aa).

The interval 1–68 (MASRTKTGLM…VSDRRTARVP (68 aa)) is disordered. The N-terminal 82 residues, 1-82 (MASRTKTGLM…ANYFLIIICM (82 aa)), are a transit peptide targeting the chloroplast. The span at 32–58 (SDGNSPSPVQSTRLSIDRSPQTVNSKP) shows a compositional bias: polar residues. Coiled-coil stretches lie at residues 95–149 (TGLL…AAQH), 202–543 (TEEL…FNSK), and 587–1084 (AAKE…GEEI). Over residues 1073–1083 (EASSTHEKGEE) the composition is skewed to basic and acidic residues. A disordered region spans residues 1073–1221 (EASSTHEKGE…LLKKKSSSQK (149 aa)). A compositionally biased stretch (polar residues) spans 1084–1097 (ITNTNPFDNSTGEQ). 2 stretches are compositionally biased toward basic and acidic residues: residues 1106–1116 (AIDRHLKDDTT) and 1129–1160 (KGEKGKDKDTVESEVYHLEKREASSERDTEHD). Residues 1175-1187 (NFDQLSNGLSLAE) are compositionally biased toward polar residues.

It belongs to the WEB family.

Its subcellular location is the plastid. The protein localises to the chloroplast. The polypeptide is WEB family protein At4g27595, chloroplastic (Arabidopsis thaliana (Mouse-ear cress)).